A 471-amino-acid chain; its full sequence is FAD-dependent monooxygenase andE (471 aa).

Residues glutamate 35, glycine 49, and arginine 108 each coordinate FAD. Residue tyrosine 216 is part of the active site. Residues aspartate 308 and alanine 321 each contribute to the FAD site. 2 consecutive transmembrane segments (helical) span residues 403–423 and 443–463; these read LANISSMLIANGEIIQYLPFP and TPFALFSAILLVQHVVPLLGL.

It belongs to the paxM FAD-dependent monooxygenase family. FAD serves as cofactor.

The protein resides in the membrane. It functions in the pathway secondary metabolite biosynthesis; terpenoid biosynthesis. Functionally, FAD-dependent monooxygenase; part of the gene cluster that mediates the biosynthesis of anditomin, a fungal meroterpenoid. The first step of the pathway is the synthesis of 3,5-dimethylorsellinic acid (DMOA) by the polyketide synthase andM. DMOA is then converted to the phthalide compound 5,7-dihydroxy-4,6-dimethylphthalide (DHDMP) by the cytochrome P450 monooxygenase andK, which is further prenylated by the prenyltransferase andD to yield farnesyl-DHDMP. Further epoxidation by the FAD-dependent monooxygenase andE leads to epoxyfarnesyl-DHDMP. The next step involves the terpene cyclase andB that converts epoxyfarnesyl-DHDMP into preandiloid A through opening of the epoxide ring followed by the cyclization of the farnesyl moiety. Preandiloid A is in turn oxidized at the C-3 hydroxyl group to yield preandiloid B by the dehydrogenase andC. The dioxygenase andA is solely responsible for the dehydrogenation of preandiloid B leading to the enone preandiloid C, as well as for the intriguing structural rearrangement to generate the bicyclo[2.2.2]octane core, transforming preandiloid C into andiconin. FAD-binding monooxygenase andJ then produces andilesin D which is reduced by dehydrogenase andI to yield andilesin A. Action of acetyltransferase andG followed by a spontaneous acetate elimination leads then to andilesin B, which is in turn substrate of the short chain dehydrogenase andH to yield andilesin C. Finally, the dioxygenase andF catalyzes the transformation of andilesin C to anditomin. The protein is FAD-dependent monooxygenase andE of Emericella variicolor (Aspergillus stellatus).